Reading from the N-terminus, the 364-residue chain is Heme A synthase (364 aa).

A run of 8 helical transmembrane segments spans residues 25-45 (ALRL…LVGG), 111-131 (FLAR…WATG), 139-159 (WPLV…WWMV), 174-194 (LATH…VMRG), 212-232 (AIAL…VAGL), 270-290 (VQFV…YHMV), 305-325 (SVVL…ALLL), and 327-347 (VPLD…GFTV). Histidine 274 is a binding site for heme. A heme-binding site is contributed by histidine 335.

This sequence belongs to the COX15/CtaA family. Type 2 subfamily. Interacts with CtaB. It depends on heme b as a cofactor.

It is found in the cell membrane. The enzyme catalyses Fe(II)-heme o + 2 A + H2O = Fe(II)-heme a + 2 AH2. Its pathway is porphyrin-containing compound metabolism; heme A biosynthesis; heme A from heme O: step 1/1. Catalyzes the conversion of heme O to heme A by two successive hydroxylations of the methyl group at C8. The first hydroxylation forms heme I, the second hydroxylation results in an unstable dihydroxymethyl group, which spontaneously dehydrates, resulting in the formyl group of heme A. The chain is Heme A synthase from Allorhizobium ampelinum (strain ATCC BAA-846 / DSM 112012 / S4) (Agrobacterium vitis (strain S4)).